The following is a 353-amino-acid chain: MLLFETVREMGHEQVLFCHGKNPEIKAIIAIHDTTLGPAMGATRLMPYVNEEAALKDALRLSRGMTYKAACANIPAGGGKAVIIANPENKTDDLLRAYGRFVNSLNGRFITGQDVNITPDDVRTISQETNHVVGVSEKSGGPAPITSLGVFLGIKAAVESRWQSKRLDGMKVAVQGLGNVGKNLCRHLHEHDVKLFVSDVDPAKAEEAKRLFGATVVEPTEIYSLDVDIFSPCALGGILNSHTIPFLQAQIIAGAANNQLENEQLHSQMLTRKGILYSPDYVINAGGLINVYNEMIGYDEEKAFKQVHNIYDTLLAIFDIAKEQGVTTNDAAKRLAEDRISNSKRSKSKAIAA.

Residue Arg44 participates in NAD(+) binding. The active-site Proton donor/acceptor is the Lys80. NAD(+) contacts are provided by residues Asp114, Thr146, 176–181 (GLGNVG), Lys204, and 255–257 (AAN).

It belongs to the Glu/Leu/Phe/Val dehydrogenases family. Homodimer.

The catalysed reaction is L-tryptophan + NAD(+) + H2O = indole-3-pyruvate + NH4(+) + NADH + H(+). Functionally, catalyzes the reversible oxidative deamination of L-tryptophan to indole-3-pyruvate in the presence of NAD(+). Cannot use other L-amino acids and D-Trp. Involved in the biosynthesis of scytonemin, a cyanobacterial radiation-absorbing pigment. This is L-tryptophan dehydrogenase from Nostoc punctiforme (strain ATCC 29133 / PCC 73102).